Consider the following 149-residue polypeptide: MTSAPWLELSRTVRFSDTDAAGVMHFQQLLGWCHQAWEESLERYGLTAGSVFPGGRREQPSVALPIVHCHADYRAPVQVGDKLLIRLKPERLDPSSFVVNSQVLLNEQLVASGCLRHVAIDANSRRRCALPDGVDRWLEASSLGRIQPL.

Aspartate 19 is a catalytic residue.

Belongs to the 4-hydroxybenzoyl-CoA thioesterase family. DHNA-CoA hydrolase subfamily.

The enzyme catalyses 1,4-dihydroxy-2-naphthoyl-CoA + H2O = 1,4-dihydroxy-2-naphthoate + CoA + H(+). Its pathway is cofactor biosynthesis; phylloquinone biosynthesis. The protein operates within quinol/quinone metabolism; 1,4-dihydroxy-2-naphthoate biosynthesis; 1,4-dihydroxy-2-naphthoate from chorismate: step 7/7. Functionally, catalyzes the hydrolysis of 1,4-dihydroxy-2-naphthoyl-CoA (DHNA-CoA) to 1,4-dihydroxy-2-naphthoate (DHNA), a reaction involved in phylloquinone (vitamin K1) biosynthesis. The polypeptide is 1,4-dihydroxy-2-naphthoyl-CoA hydrolase (Synechococcus sp. (strain CC9605)).